We begin with the raw amino-acid sequence, 83 residues long: NADH dehydrogenase [ubiquinone] iron-sulfur protein 5-B (83 aa).

Residues 11–52 (KGRCYDFWMDFSECMSHCREPKDCTLLREDYLECLHHSKEFQ) form the CHCH domain. 2 short sequence motifs (cx9C motif) span residues 14–24 (CYDFWMDFSEC) and 34–44 (CTLLREDYLEC). 2 cysteine pairs are disulfide-bonded: Cys14–Cys44 and Cys24–Cys34. Residues 62 to 83 (QRKLRAASRKGEETGDGTHTHH) form a disordered region.

Belongs to the complex I NDUFS5 subunit family. As to quaternary structure, complex I is composed of at least 49 different subunits. This is a component of the iron-sulfur (IP) fragment of the enzyme.

The protein resides in the mitochondrion. It localises to the mitochondrion inner membrane. Its subcellular location is the mitochondrion intermembrane space. Functionally, accessory subunit of the mitochondrial membrane respiratory chain NADH dehydrogenase (Complex I), that is believed not to be involved in catalysis. Complex I functions in the transfer of electrons from NADH to the respiratory chain. The immediate electron acceptor for the enzyme is believed to be ubiquinone. This chain is NADH dehydrogenase [ubiquinone] iron-sulfur protein 5-B, found in Arabidopsis thaliana (Mouse-ear cress).